A 377-amino-acid chain; its full sequence is tRNA(Met) cytidine acetate ligase (377 aa).

ATP is bound by residues 7 to 20 (ITEY…HLFH), glycine 100, asparagine 153, and arginine 178.

This sequence belongs to the TmcAL family.

Its subcellular location is the cytoplasm. The enzyme catalyses cytidine(34) in elongator tRNA(Met) + acetate + ATP = N(4)-acetylcytidine(34) in elongator tRNA(Met) + AMP + diphosphate. Functionally, catalyzes the formation of N(4)-acetylcytidine (ac(4)C) at the wobble position of elongator tRNA(Met), using acetate and ATP as substrates. First activates an acetate ion to form acetyladenylate (Ac-AMP) and then transfers the acetyl group to tRNA to form ac(4)C34. In Staphylococcus epidermidis (strain ATCC 12228 / FDA PCI 1200), this protein is tRNA(Met) cytidine acetate ligase.